The following is a 417-amino-acid chain: 3-ketoacyl-CoA thiolase, peroxisomal (417 aa).

The transit peptide at 1 to 15 (MSQRLQSIKDHLVES) directs the protein to the peroxisome. The PTS2-type peroxisomal targeting signal stretch occupies residues 1 to 15 (MSQRLQSIKDHLVES). The active-site Acyl-thioester intermediate is the Cys125. Catalysis depends on proton acceptor residues His375 and Cys403.

It belongs to the thiolase-like superfamily. Thiolase family. As to quaternary structure, homodimer. Interacts (via PTS2-type peroxisomal targeting signal region) with PEX7; leading to its translocation into peroxisomes.

It localises to the peroxisome. It is found in the mitochondrion intermembrane space. The enzyme catalyses an acyl-CoA + acetyl-CoA = a 3-oxoacyl-CoA + CoA. The protein operates within lipid metabolism; fatty acid metabolism. Its function is as follows. Responsible for the thiolytic cleavage of straight chain 3-keto fatty acyl-CoAs (3-oxoacyl-CoAs). The sequence is that of 3-ketoacyl-CoA thiolase, peroxisomal (POT1) from Saccharomyces cerevisiae (strain ATCC 204508 / S288c) (Baker's yeast).